The following is a 431-amino-acid chain: 3-phosphoshikimate 1-carboxyvinyltransferase (431 aa).

3-phosphoshikimate contacts are provided by Lys-22, Ser-23, and Arg-27. A phosphoenolpyruvate-binding site is contributed by Lys-22. The phosphoenolpyruvate site is built by Gly-94 and Arg-122. 4 residues coordinate 3-phosphoshikimate: Ser-167, Gln-169, Asp-314, and Lys-341. Gln-169 serves as a coordination point for phosphoenolpyruvate. Asp-314 functions as the Proton acceptor in the catalytic mechanism. Phosphoenolpyruvate is bound by residues Arg-345 and Arg-391.

The protein belongs to the EPSP synthase family. Monomer.

The protein resides in the cytoplasm. It catalyses the reaction 3-phosphoshikimate + phosphoenolpyruvate = 5-O-(1-carboxyvinyl)-3-phosphoshikimate + phosphate. Its pathway is metabolic intermediate biosynthesis; chorismate biosynthesis; chorismate from D-erythrose 4-phosphate and phosphoenolpyruvate: step 6/7. Its function is as follows. Catalyzes the transfer of the enolpyruvyl moiety of phosphoenolpyruvate (PEP) to the 5-hydroxyl of shikimate-3-phosphate (S3P) to produce enolpyruvyl shikimate-3-phosphate and inorganic phosphate. The sequence is that of 3-phosphoshikimate 1-carboxyvinyltransferase from Leuconostoc citreum (strain KM20).